Reading from the N-terminus, the 134-residue chain is Large ribosomal subunit protein bL17 (134 aa).

The protein belongs to the bacterial ribosomal protein bL17 family. Part of the 50S ribosomal subunit. Contacts protein L32.

This Anaplasma marginale (strain Florida) protein is Large ribosomal subunit protein bL17.